A 343-amino-acid chain; its full sequence is Major capsid protein VP1 (343 aa).

This sequence belongs to the polyomaviruses coat protein VP1 family. In terms of assembly, homomultimer; disulfide-linked. The virus capsid is composed of 72 icosahedral units, each one composed of five disulfide-linked copies of VP1. Interacts with minor capsid proteins VP2 and VP3.

It is found in the virion. The protein resides in the host nucleus. Functionally, forms an icosahedral capsid with a T=7 symmetry and a 46-48 nm diameter. The capsid is composed of 72 pentamers linked to each other by disulfide bonds and associated with VP2 or VP3 proteins. Interacts with sialic acids on the cell surface to provide virion attachment to target cell. Once attached, the virion is internalized by endocytosis and traffics to the endoplasmic reticulum. Inside the endoplasmic reticulum, the protein folding machinery isomerizes VP1 interpentamer disulfide bonds, thereby triggering initial uncoating. Next, the virion uses the endoplasmic reticulum-associated degradation machinery to probably translocate in the cytosol before reaching the nucleus. Nuclear entry of the viral DNA involves the selective exposure and importin recognition of VP2/Vp3 nuclear localization signal. In late phase of infection, neo-synthesized VP1 encapsulates replicated genomic DNA in the nucleus, and participates in rearranging nucleosomes around the viral DNA. The protein is Major capsid protein VP1 of Psittacidae (parrots).